We begin with the raw amino-acid sequence, 162 residues long: Flagellar assembly factor FliW (162 aa).

This sequence belongs to the FliW family. Interacts with translational regulator CsrA and flagellin(s).

Its subcellular location is the cytoplasm. Its function is as follows. Acts as an anti-CsrA protein, binds CsrA and prevents it from repressing translation of its target genes, one of which is flagellin. Binds to flagellin and participates in the assembly of the flagellum. This chain is Flagellar assembly factor FliW, found in Alkaliphilus metalliredigens (strain QYMF).